Here is a 383-residue protein sequence, read N- to C-terminus: Dihydroorotase (383 aa).

Zn(2+) is bound by residues H47 and H49. Residues H49 to R51 and N81 contribute to the substrate site. Positions 128, 159, 198, and 264 each coordinate Zn(2+). K128 carries the post-translational modification N6-carboxylysine. Residue D264 is part of the active site. Residues H268 and P280–G281 contribute to the substrate site.

The protein belongs to the metallo-dependent hydrolases superfamily. DHOase family. Class I DHOase subfamily. The cofactor is Zn(2+).

It carries out the reaction (S)-dihydroorotate + H2O = N-carbamoyl-L-aspartate + H(+). The protein operates within pyrimidine metabolism; UMP biosynthesis via de novo pathway; (S)-dihydroorotate from bicarbonate: step 3/3. In terms of biological role, catalyzes the reversible cyclization of carbamoyl aspartate to dihydroorotate. This chain is Dihydroorotase, found in Pyrobaculum aerophilum (strain ATCC 51768 / DSM 7523 / JCM 9630 / CIP 104966 / NBRC 100827 / IM2).